Consider the following 301-residue polypeptide: Diaminopimelate epimerase (301 aa).

The substrate site is built by Asn-15, Gln-47, and Asn-67. Cys-76 serves as the catalytic Proton donor. Substrate is bound by residues 77-78 (GN), Asn-163, Asn-197, and 215-216 (ER). Cys-224 functions as the Proton acceptor in the catalytic mechanism. 225–226 (GS) lines the substrate pocket.

This sequence belongs to the diaminopimelate epimerase family. As to quaternary structure, homodimer.

The protein resides in the cytoplasm. It catalyses the reaction (2S,6S)-2,6-diaminopimelate = meso-2,6-diaminopimelate. It functions in the pathway amino-acid biosynthesis; L-lysine biosynthesis via DAP pathway; DL-2,6-diaminopimelate from LL-2,6-diaminopimelate: step 1/1. Functionally, catalyzes the stereoinversion of LL-2,6-diaminopimelate (L,L-DAP) to meso-diaminopimelate (meso-DAP), a precursor of L-lysine and an essential component of the bacterial peptidoglycan. The sequence is that of Diaminopimelate epimerase from Rhizobium etli (strain ATCC 51251 / DSM 11541 / JCM 21823 / NBRC 15573 / CFN 42).